We begin with the raw amino-acid sequence, 216 residues long: ATP-dependent dethiobiotin synthetase BioD (216 aa).

12–17 (NVGKTF) contributes to the ATP binding site. Thr16 provides a ligand contact to Mg(2+). Lys36 is an active-site residue. Residue Ser40 participates in substrate binding. ATP is bound by residues Asp53, 110–113 (EGAG), and 170–171 (NQ). 2 residues coordinate Mg(2+): Asp53 and Glu110.

This sequence belongs to the dethiobiotin synthetase family. In terms of assembly, homodimer. Mg(2+) serves as cofactor.

The protein resides in the cytoplasm. The catalysed reaction is (7R,8S)-7,8-diammoniononanoate + CO2 + ATP = (4R,5S)-dethiobiotin + ADP + phosphate + 3 H(+). It functions in the pathway cofactor biosynthesis; biotin biosynthesis; biotin from 7,8-diaminononanoate: step 1/2. Its function is as follows. Catalyzes a mechanistically unusual reaction, the ATP-dependent insertion of CO2 between the N7 and N8 nitrogen atoms of 7,8-diaminopelargonic acid (DAPA, also called 7,8-diammoniononanoate) to form a ureido ring. In Vesicomyosocius okutanii subsp. Calyptogena okutanii (strain HA), this protein is ATP-dependent dethiobiotin synthetase BioD.